Here is a 443-residue protein sequence, read N- to C-terminus: Probable D-serine dehydratase (443 aa).

Lys106 is subject to N6-(pyridoxal phosphate)lysine.

This sequence belongs to the serine/threonine dehydratase family. DsdA subfamily. Pyridoxal 5'-phosphate is required as a cofactor.

The catalysed reaction is D-serine = pyruvate + NH4(+). The chain is Probable D-serine dehydratase from Cupriavidus pinatubonensis (strain JMP 134 / LMG 1197) (Cupriavidus necator (strain JMP 134)).